The primary structure comprises 319 residues: Aspartate carbamoyltransferase catalytic subunit (319 aa).

Carbamoyl phosphate contacts are provided by Arg57 and Thr58. Residue Lys85 participates in L-aspartate binding. Carbamoyl phosphate-binding residues include Arg107, His140, and Gln143. L-aspartate contacts are provided by Arg173 and Arg227. The carbamoyl phosphate site is built by Gly268 and Pro269.

Belongs to the aspartate/ornithine carbamoyltransferase superfamily. ATCase family. As to quaternary structure, heterododecamer (2C3:3R2) of six catalytic PyrB chains organized as two trimers (C3), and six regulatory PyrI chains organized as three dimers (R2).

The catalysed reaction is carbamoyl phosphate + L-aspartate = N-carbamoyl-L-aspartate + phosphate + H(+). It participates in pyrimidine metabolism; UMP biosynthesis via de novo pathway; (S)-dihydroorotate from bicarbonate: step 2/3. Catalyzes the condensation of carbamoyl phosphate and aspartate to form carbamoyl aspartate and inorganic phosphate, the committed step in the de novo pyrimidine nucleotide biosynthesis pathway. The polypeptide is Aspartate carbamoyltransferase catalytic subunit (Mycobacterium tuberculosis (strain ATCC 25177 / H37Ra)).